A 158-amino-acid polypeptide reads, in one-letter code: Cyclic pyranopterin monophosphate synthase (158 aa).

Substrate is bound by residues 74-76 (MCH) and 112-113 (ME). Residue D127 is part of the active site.

Belongs to the MoaC family. As to quaternary structure, homohexamer; trimer of dimers.

The enzyme catalyses (8S)-3',8-cyclo-7,8-dihydroguanosine 5'-triphosphate = cyclic pyranopterin phosphate + diphosphate. Its pathway is cofactor biosynthesis; molybdopterin biosynthesis. In terms of biological role, catalyzes the conversion of (8S)-3',8-cyclo-7,8-dihydroguanosine 5'-triphosphate to cyclic pyranopterin monophosphate (cPMP). The protein is Cyclic pyranopterin monophosphate synthase of Helicobacter pylori (strain G27).